The primary structure comprises 433 residues: Enolase (433 aa).

Gln163 provides a ligand contact to (2R)-2-phosphoglycerate. Residue Glu205 is the Proton donor of the active site. Positions 242, 286, and 313 each coordinate Mg(2+). (2R)-2-phosphoglycerate-binding residues include Lys338, Arg367, Ser368, and Lys389. Lys338 (proton acceptor) is an active-site residue.

The protein belongs to the enolase family. Mg(2+) is required as a cofactor.

It localises to the cytoplasm. Its subcellular location is the secreted. The protein resides in the cell surface. It carries out the reaction (2R)-2-phosphoglycerate = phosphoenolpyruvate + H2O. It functions in the pathway carbohydrate degradation; glycolysis; pyruvate from D-glyceraldehyde 3-phosphate: step 4/5. Functionally, catalyzes the reversible conversion of 2-phosphoglycerate (2-PG) into phosphoenolpyruvate (PEP). It is essential for the degradation of carbohydrates via glycolysis. The chain is Enolase from Koribacter versatilis (strain Ellin345).